Here is an 883-residue protein sequence, read N- to C-terminus: Integrator complex subunit 6-A (883 aa).

Residues 3–227 (ILLFLLDTSA…QCLESLVQKV (225 aa)) form the VWFA domain. The short motif at 626 to 633 (MMIDEADE) is the Inhibitory loop element.

This sequence belongs to the Integrator subunit 6 family. In terms of assembly, component of the Integrator complex, composed of core subunits INTS1, INTS2, INTS3, INTS4, INTS5, INTS6, INTS7, INTS8, INTS9/RC74, INTS10, INTS11/CPSF3L, INTS12, INTS13, INTS14 and INTS15. The core complex associates with protein phosphatase 2A subunits PPP2CA and PPP2R1A, to form the Integrator-PP2A (INTAC) complex.

It is found in the nucleus. The protein localises to the chromosome. Functionally, component of the integrator complex, a multiprotein complex that terminates RNA polymerase II (Pol II) transcription in the promoter-proximal region of genes. The integrator complex provides a quality checkpoint during transcription elongation by driving premature transcription termination of transcripts that are unfavorably configured for transcriptional elongation: the complex terminates transcription by (1) catalyzing dephosphorylation of the C-terminal domain (CTD) of Pol II subunit POLR2A/RPB1 and SUPT5H/SPT5, (2) degrading the exiting nascent RNA transcript via endonuclease activity and (3) promoting the release of Pol II from bound DNA. The integrator complex is also involved in terminating the synthesis of non-coding Pol II transcripts, such as enhancer RNAs (eRNAs), small nuclear RNAs (snRNAs), telomerase RNAs and long non-coding RNAs (lncRNAs). Within the integrator complex, INTS6 acts as a molecular adapter that promotes assembly of protein phosphatase 2A (PP2A) subunits to the integrator core complex, promoting recruitment of PP2A to transcription pause-release checkpoint. This chain is Integrator complex subunit 6-A (ints6-a), found in Xenopus laevis (African clawed frog).